A 628-amino-acid polypeptide reads, in one-letter code: DNA mismatch repair protein MutL (628 aa).

The segment at S335–P411 is disordered. Positions E343–T353 are enriched in polar residues.

This sequence belongs to the DNA mismatch repair MutL/HexB family.

In terms of biological role, this protein is involved in the repair of mismatches in DNA. It is required for dam-dependent methyl-directed DNA mismatch repair. May act as a 'molecular matchmaker', a protein that promotes the formation of a stable complex between two or more DNA-binding proteins in an ATP-dependent manner without itself being part of a final effector complex. The chain is DNA mismatch repair protein MutL from Shewanella pealeana (strain ATCC 700345 / ANG-SQ1).